The following is a 124-amino-acid chain: ATP synthase epsilon chain (124 aa).

The protein belongs to the ATPase epsilon chain family. In terms of assembly, F-type ATPases have 2 components, CF(1) - the catalytic core - and CF(0) - the membrane proton channel. CF(1) has five subunits: alpha(3), beta(3), gamma(1), delta(1), epsilon(1). CF(0) has three main subunits: a, b and c.

Its subcellular location is the cell membrane. Produces ATP from ADP in the presence of a proton gradient across the membrane. This Streptomyces griseus subsp. griseus (strain JCM 4626 / CBS 651.72 / NBRC 13350 / KCC S-0626 / ISP 5235) protein is ATP synthase epsilon chain.